A 374-amino-acid chain; its full sequence is DNA replication and repair protein RecF (374 aa).

An ATP-binding site is contributed by 34–41; that stretch reads GDNGAGKT.

It belongs to the RecF family.

The protein localises to the cytoplasm. Its function is as follows. The RecF protein is involved in DNA metabolism; it is required for DNA replication and normal SOS inducibility. RecF binds preferentially to single-stranded, linear DNA. It also seems to bind ATP. The chain is DNA replication and repair protein RecF from Rhizobium etli (strain ATCC 51251 / DSM 11541 / JCM 21823 / NBRC 15573 / CFN 42).